A 208-amino-acid polypeptide reads, in one-letter code: Ribosomal RNA large subunit methyltransferase E (208 aa).

The S-adenosyl-L-methionine site is built by G63, W65, D83, D99, and D124. Residue K164 is the Proton acceptor of the active site.

It belongs to the class I-like SAM-binding methyltransferase superfamily. RNA methyltransferase RlmE family.

Its subcellular location is the cytoplasm. The catalysed reaction is uridine(2552) in 23S rRNA + S-adenosyl-L-methionine = 2'-O-methyluridine(2552) in 23S rRNA + S-adenosyl-L-homocysteine + H(+). In terms of biological role, specifically methylates the uridine in position 2552 of 23S rRNA at the 2'-O position of the ribose in the fully assembled 50S ribosomal subunit. The sequence is that of Ribosomal RNA large subunit methyltransferase E from Blochmanniella pennsylvanica (strain BPEN).